Here is a 227-residue protein sequence, read N- to C-terminus: Eukaryotic translation initiation factor NCBP (227 aa).

Basic and acidic residues predominate over residues 1-22; that stretch reads MEPAAEKREAEQEELQQQHDEP. Residues 1 to 43 form a disordered region; sequence MEPAAEKREAEQEELQQQHDEPAVPSADDDEAEAEENERRNRE. A compositionally biased stretch (acidic residues) spans 27–36; that stretch reads ADDDEAEAEE.

It belongs to the eukaryotic initiation factor 4E family. In terms of assembly, EIF4F is a multi-subunit complex, the composition of which varies with external and internal environmental conditions. It is composed of at least EIF4A, EIF4E and EIF4G. EIF4E is also known to interact with other partners. In higher plants two isoforms of EIF4F have been identified, named isoform EIF4F and isoform EIF(iso)4F. Isoform EIF4F has subunits p220 and p26, whereas isoform EIF(iso)4F has subunits p82 and p28.

In terms of biological role, recognizes and binds the 7-methylguanosine-containing mRNA cap during an early step in the initiation of protein synthesis and facilitates ribosome binding by inducing the unwinding of the mRNAs secondary structures. This chain is Eukaryotic translation initiation factor NCBP (NCBP), found in Oryza sativa subsp. japonica (Rice).